The following is a 106-amino-acid chain: Small ribosomal subunit protein bS16 (106 aa).

The protein belongs to the bacterial ribosomal protein bS16 family.

The sequence is that of Small ribosomal subunit protein bS16 from Wolbachia pipientis wMel.